The sequence spans 162 residues: Caveolin-2 (162 aa).

At 1–86 the chain is on the cytoplasmic side; sequence MGLETEKADV…FEISKYVMYK (86 aa). Tyr19 carries the phosphotyrosine; by SRC modification. 2 positions are modified to phosphoserine: Ser20 and Ser23. Residue Tyr27 is modified to Phosphotyrosine; by SRC. Residue Ser36 is modified to Phosphoserine. The helical intramembrane region spans 87 to 107; the sequence is FLTVFLAIPLAFLAGILFATL. The Cytoplasmic segment spans residues 108-162; the sequence is SCLHIWIIMPFVKTCLMVLPSVQTIWKSVTDAIIAPLCTSIGRSFSSVSLQLSQD.

The protein belongs to the caveolin family. As to quaternary structure, monomer or homodimer. Interacts with CAV1; the interaction forms a stable heterooligomeric complex that is required for targeting to lipid rafts and for caveolae formation. Tyrosine phosphorylated forms do not form heterooligomers with the Tyr-19-phosphorylated form existing as a monomer or dimer, and the Tyr-27-form as a monomer only. Interacts (tyrosine phosphorylated form) with the SH2 domain-containing proteins, RASA1, NCK1 and SRC. Interacts (tyrosine phosphorylated form) with INSR, the interaction (Tyr-27-phosphorylated form) is increased on insulin stimulation. Interacts (Tyr-19 phosphorylated form) with MAPK1 (phosphorylated form); the interaction, promoted by insulin, leads to nuclear location and MAPK1 activation. Interacts with STAT3; the interaction is increased on insulin-induced tyrosine phosphorylation leading to STAT activation. Phosphorylated on serine and tyrosine residues. CAV1 promotes phosphorylation on Ser-23 which then targets the complex to the plasma membrane, lipid rafts and caveolae. Phosphorylation on Ser-36 appears to modulate mitosis in endothelial cells. Phosphorylation on both Tyr-19 and Tyr-27 is required for insulin-induced 'Ser-727' phosphorylation of STAT3 and its activation. Phosphorylation on Tyr-19 is required for insulin-induced phosphorylation of MAPK1 and DNA binding of STAT3. Tyrosine phosphorylation is induced by both EGF and insulin (By. similarity).

The protein localises to the nucleus. Its subcellular location is the cytoplasm. It localises to the golgi apparatus membrane. It is found in the cell membrane. The protein resides in the membrane. The protein localises to the caveola. In terms of biological role, may act as a scaffolding protein within caveolar membranes. Interacts directly with G-protein alpha subunits and can functionally regulate their activity. Acts as an accessory protein in conjunction with CAV1 in targeting to lipid rafts and driving caveolae formation. The Ser-36 phosphorylated form has a role in modulating mitosis in endothelial cells. Positive regulator of cellular mitogenesis of the MAPK signaling pathway. Required for the insulin-stimulated nuclear translocation and activation of MAPK1 and STAT3, and the subsequent regulation of cell cycle progression. In Plecturocebus moloch (Dusky titi monkey), this protein is Caveolin-2 (CAV2).